Here is a 538-residue protein sequence, read N- to C-terminus: Cytochrome P450 52-M1 (538 aa).

Residues 18 to 38 (GLLPLLFVAFLVLHEPIWLLW) traverse the membrane as a helical segment. Residue Cys-484 coordinates heme.

The protein belongs to the cytochrome P450 family. The cofactor is heme.

It localises to the membrane. It catalyses the reaction an omega-methyl-long-chain fatty acid + reduced [NADPH--hemoprotein reductase] + O2 = an omega-hydroxy-long-chain fatty acid + oxidized [NADPH--hemoprotein reductase] + H2O + H(+). It carries out the reaction an (omega-1)-ethyl fatty acid + reduced [NADPH--hemoprotein reductase] + O2 = an (omega-1)-hydroxy-long-chain fatty acid + oxidized [NADPH--hemoprotein reductase] + H2O + H(+). The catalysed reaction is (9Z)-octadecenoate + reduced [NADPH--hemoprotein reductase] + O2 = 18-hydroxy-(9Z)-octadecenoate + oxidized [NADPH--hemoprotein reductase] + H2O + H(+). The enzyme catalyses (9Z)-octadecenoate + reduced [NADPH--hemoprotein reductase] + O2 = 17-hydroxy-(9Z)-octadecenoate + oxidized [NADPH--hemoprotein reductase] + H2O + H(+). It catalyses the reaction (9Z,12Z)-octadecadienoate + reduced [NADPH--hemoprotein reductase] + O2 = 18-hydroxy-(9Z,12Z)-octadecadienoate + oxidized [NADPH--hemoprotein reductase] + H2O + H(+). It carries out the reaction (9Z,12Z)-octadecadienoate + reduced [NADPH--hemoprotein reductase] + O2 = 17-hydroxy-(9Z,12Z)-octadecadienoate + oxidized [NADPH--hemoprotein reductase] + H2O + H(+). The catalysed reaction is hexadecanoate + reduced [NADPH--hemoprotein reductase] + O2 = 16-hydroxyhexadecanoate + oxidized [NADPH--hemoprotein reductase] + H2O + H(+). The enzyme catalyses (9Z)-hexadecenoate + reduced [NADPH--hemoprotein reductase] + O2 = (9Z)-16-hydroxyhexadec-9-enoate + oxidized [NADPH--hemoprotein reductase] + H2O + H(+). It catalyses the reaction octadecanoate + reduced [NADPH--hemoprotein reductase] + O2 = 18-hydroxyoctadecanoate + oxidized [NADPH--hemoprotein reductase] + H2O + H(+). Functionally, catalyzes the first step of sophorolipid biosynthesis. Catalyzes the terminal (at the omega-position) or subterminal (at the omega(-1)-position) hydroxylation of a fatty acid. This converts the fatty acid to a substrate for the subsequent glycosyltransferase reactions. Oleic acid is the preferred substrate, but it acts on various other C-16, C-18 and C-20 saturated and unsaturated fatty acids, namely palmitic, palmitoleic, stearic, linoleic, cis-9,10-epoxystearic, trans-9,10-epoxystearic and arachidonic acid. The protein is Cytochrome P450 52-M1 of Starmerella bombicola (Yeast).